Here is a 187-residue protein sequence, read N- to C-terminus: Flavin prenyltransferase UbiX (187 aa).

FMN is bound by residues 9 to 11, serine 34, and arginine 123; that span reads GAS. Dimethylallyl phosphate-binding residues include tyrosine 153 and lysine 169.

Belongs to the UbiX/PAD1 family.

It carries out the reaction dimethylallyl phosphate + FMNH2 = prenylated FMNH2 + phosphate. Flavin prenyltransferase that catalyzes the synthesis of the prenylated FMN cofactor (prenyl-FMN) for 4-hydroxy-3-polyprenylbenzoic acid decarboxylase UbiD. The prenyltransferase is metal-independent and links a dimethylallyl moiety from dimethylallyl monophosphate (DMAP) to the flavin N5 and C6 atoms of FMN. This chain is Flavin prenyltransferase UbiX, found in Helicobacter pylori (strain ATCC 700392 / 26695) (Campylobacter pylori).